We begin with the raw amino-acid sequence, 172 residues long: Ribosome maturation factor RimM (172 aa).

Positions 96 to 168 (DGEFYYHEII…RVDVEILEGL (73 aa)) constitute a PRC barrel domain.

This sequence belongs to the RimM family. As to quaternary structure, binds ribosomal protein uS19.

It is found in the cytoplasm. Its function is as follows. An accessory protein needed during the final step in the assembly of 30S ribosomal subunit, possibly for assembly of the head region. Essential for efficient processing of 16S rRNA. May be needed both before and after RbfA during the maturation of 16S rRNA. It has affinity for free ribosomal 30S subunits but not for 70S ribosomes. The protein is Ribosome maturation factor RimM of Streptococcus pneumoniae serotype 4 (strain ATCC BAA-334 / TIGR4).